The following is a 584-amino-acid chain: Methionine--tRNA ligase (584 aa).

A 'HIGH' region motif is present at residues 12 to 22; that stretch reads PYANGDLHLGH. Residues C144, C147, C157, and C160 each coordinate Zn(2+). The 'KMSKS' region motif lies at 334-338; it reads QFSTS. An ATP-binding site is contributed by T337. Residues 541–563 form a disordered region; it reads EGRDRWAPSELEAGRPLPPPQPL.

This sequence belongs to the class-I aminoacyl-tRNA synthetase family. MetG type 1 subfamily. Monomer. Zn(2+) serves as cofactor.

It is found in the cytoplasm. It catalyses the reaction tRNA(Met) + L-methionine + ATP = L-methionyl-tRNA(Met) + AMP + diphosphate. Functionally, is required not only for elongation of protein synthesis but also for the initiation of all mRNA translation through initiator tRNA(fMet) aminoacylation. In Thermomicrobium roseum (strain ATCC 27502 / DSM 5159 / P-2), this protein is Methionine--tRNA ligase.